A 176-amino-acid polypeptide reads, in one-letter code: MNLPGPIHDFLLVFLGSGLILGGLGVVLLPNPIYSAFSLGFVLVCISLFYILLNSYFVAAAQLLIYVGAINVLIIFAVMFMNGSEYYKDFHLWTIGDGVTSVVCTGLFISLITTIPDMSWYGIIWTTKSNQILEQDLITNSQQIGVHLSTDFFLPFELVSIILLVALIGAIAVARQ.

5 helical membrane passes run 10–30 (FLLVFLGSGLILGGLGVVLLP), 33–53 (IYSAFSLGFVLVCISLFYILL), 61–81 (AQLLIYVGAINVLIIFAVMFM), 92–112 (LWTIGDGVTSVVCTGLFISLI), and 152–172 (FFLPFELVSIILLVALIGAIA).

The protein belongs to the complex I subunit 6 family. NDH is composed of at least 16 different subunits, 5 of which are encoded in the nucleus.

Its subcellular location is the plastid. It is found in the chloroplast thylakoid membrane. It carries out the reaction a plastoquinone + NADH + (n+1) H(+)(in) = a plastoquinol + NAD(+) + n H(+)(out). The catalysed reaction is a plastoquinone + NADPH + (n+1) H(+)(in) = a plastoquinol + NADP(+) + n H(+)(out). Functionally, NDH shuttles electrons from NAD(P)H:plastoquinone, via FMN and iron-sulfur (Fe-S) centers, to quinones in the photosynthetic chain and possibly in a chloroplast respiratory chain. The immediate electron acceptor for the enzyme in this species is believed to be plastoquinone. Couples the redox reaction to proton translocation, and thus conserves the redox energy in a proton gradient. In Coffea arabica (Arabian coffee), this protein is NAD(P)H-quinone oxidoreductase subunit 6, chloroplastic (ndhG).